The sequence spans 954 residues: Glycine dehydrogenase (decarboxylating) (954 aa).

N6-(pyridoxal phosphate)lysine is present on Lys704.

It belongs to the GcvP family. The glycine cleavage system is composed of four proteins: P, T, L and H. Pyridoxal 5'-phosphate serves as cofactor.

It catalyses the reaction N(6)-[(R)-lipoyl]-L-lysyl-[glycine-cleavage complex H protein] + glycine + H(+) = N(6)-[(R)-S(8)-aminomethyldihydrolipoyl]-L-lysyl-[glycine-cleavage complex H protein] + CO2. The glycine cleavage system catalyzes the degradation of glycine. The P protein binds the alpha-amino group of glycine through its pyridoxal phosphate cofactor; CO(2) is released and the remaining methylamine moiety is then transferred to the lipoamide cofactor of the H protein. This is Glycine dehydrogenase (decarboxylating) from Vibrio cholerae serotype O1 (strain ATCC 39541 / Classical Ogawa 395 / O395).